The following is a 408-amino-acid chain: Probable acyl-CoA dehydrogenase 6 (408 aa).

Glu265 serves as the catalytic Proton acceptor.

Belongs to the acyl-CoA dehydrogenase family. In terms of assembly, homotetramer. Requires FAD as cofactor.

It catalyses the reaction 3-methylbutanoyl-CoA + oxidized [electron-transfer flavoprotein] + H(+) = 3-methylbut-2-enoyl-CoA + reduced [electron-transfer flavoprotein]. It functions in the pathway amino-acid degradation; L-leucine degradation; (S)-3-hydroxy-3-methylglutaryl-CoA from 3-isovaleryl-CoA: step 1/3. This Caenorhabditis elegans protein is Probable acyl-CoA dehydrogenase 6 (acdh-6).